We begin with the raw amino-acid sequence, 564 residues long: Asparagine synthetase domain-containing protein CG17486 (564 aa).

The active-site Nucleophile is Cys-2. The Glutamine amidotransferase type-2 domain maps to 2-180 (CGIFCSVVNN…PLGLFRVKLN (179 aa)). Residues 280 to 541 (PFCRLCMQKL…GLRDVVFLKK (262 aa)) enclose the Asparagine synthetase domain.

The protein is Asparagine synthetase domain-containing protein CG17486 of Drosophila melanogaster (Fruit fly).